The chain runs to 345 residues: Anthranilate phosphoribosyltransferase (345 aa).

5-phospho-alpha-D-ribose 1-diphosphate contacts are provided by residues Gly75, 78-79 (GD), Ser83, 85-88 (NIST), 103-111 (KHGNRAASS), and Gly115. Gly75 contributes to the anthranilate binding site. Residue Ser87 coordinates Mg(2+). An anthranilate-binding site is contributed by Asn106. Position 161 (Arg161) interacts with anthranilate. Mg(2+)-binding residues include Asp219 and Glu220.

It belongs to the anthranilate phosphoribosyltransferase family. Homodimer. Mg(2+) serves as cofactor.

The enzyme catalyses N-(5-phospho-beta-D-ribosyl)anthranilate + diphosphate = 5-phospho-alpha-D-ribose 1-diphosphate + anthranilate. The protein operates within amino-acid biosynthesis; L-tryptophan biosynthesis; L-tryptophan from chorismate: step 2/5. Its function is as follows. Catalyzes the transfer of the phosphoribosyl group of 5-phosphorylribose-1-pyrophosphate (PRPP) to anthranilate to yield N-(5'-phosphoribosyl)-anthranilate (PRA). In Nocardia farcinica (strain IFM 10152), this protein is Anthranilate phosphoribosyltransferase.